Consider the following 132-residue polypeptide: Replication enhancer protein (132 aa).

Belongs to the geminiviridae replication enhancer protein family. Homooligomer. Interacts with the replication-associated protein (REP). Interacts with host proliferating cell nuclear antigen (PCNA). Interacts with host retinoblastoma-related protein 1 (RBR1), and may thereby deregulate the host cell cycle. Oligomerization and interaction with PCNA are necessary for optimal replication enhancement.

Increases viral DNA accumulation. Enhances infectivity and symptom expression. The protein is Replication enhancer protein of Solanum lycopersicum (Tomato).